The sequence spans 440 residues: Xylose isomerase (440 aa).

Active-site residues include H101 and D104. Residues E232, E268, H271, D296, D307, D309, and D339 each contribute to the Mg(2+) site.

It belongs to the xylose isomerase family. In terms of assembly, homotetramer. It depends on Mg(2+) as a cofactor.

The protein resides in the cytoplasm. The enzyme catalyses alpha-D-xylose = alpha-D-xylulofuranose. This Salmonella dublin (strain CT_02021853) protein is Xylose isomerase.